A 1349-amino-acid polypeptide reads, in one-letter code: MSQHFTSIFENLRFVTIKRSTNAQQQQQQQQQQLQQQQQQLQQQKAQTQQQNSRKIKTQATPTLNGNGLLSGNPNGGGGDSSPSHEVDHPGGAQGAQAAGGLPSSSGTPLRHHKRASISTASPPIRERRGTNTSIVVELDGSGSGSGSGGGGVGVGQGAGCPPSGSCTASGKSSRELSPSPKNQQQPRKMSQDYRSRAGSFMHLDDEGRSLLMRKPMRLKNIEGRPEVYDTLHCKGREILSCSKATCTSSIMNIGNAAVEARKSDLILEHAKDFLEQYFTSIKRTSSTAHETRWKQVRQSIETTGHYQLTETELIYGAKLAWRNSSRCIGRIQWSKLQVFDCRYVTTTSGMFEAICNHIKYATNKGNLRSAITIFPQRTDAKHDYRIWNNQLISYAGYKQADGKIIGDPMNVEFTEVCTKLGWKSKGSEWDILPLVVSANGHDPDYFDYPPELILEVPLTHPKFEWFSDLGLRWYALPAVSSMLFDVGGIQFTATTFSGWYMSTEIGSRNLCDTNRRNMLETVALKMQLDTRTPTSLWKDKAVVEMNIAVLHSYQSRNVTIVDHHTASESFMKHFENESKLRNGCPADWIWIVPPLSGSITPVFHQEMALYYLKPSFEYQDPAWRTHVWKKGRGESKGKKPRRKFNFKQIARAVKFTSKLFGRALSKRIKATVLYATETGKSEQYAKQLCELLGHAFNAQIYCMSDYDISSIEHEALLIVVASTFGNGDPPENGELFSQELYAMRVQESSEHGLQDSSIGSSKSFMKASSRQEFMKLPLQQVKRIDRWDSLRGSTSDTFTEETFGPLSNVRFAVFALGSSAYPNFCAFGQYVDNILGELGGERLLRVAYGDEMCGQEQSFRKWAPEVFKLACETFCLDPEESLSDASLALQNDSLTVNTVRLVPSANKGSLDSSLSKYHNKKVHCCKAKAKPHNLTRLSEGAKTTMLLEICAPGLEYEPGDHVGIFPANRTELVDGLLNRLVGVDNPDEVLQLQLLKEKQTSNGIFKCWEPHDKIPPDTLRNLLARFFDLTTPPSRQLLTLLAGFCEDTADKERLELLVNDSSAYEDWRHWRLPHLLDVLEEFPSCRPPAPLLLAQLTPLQPRFYSISSSPRRVSDEIHLTVAIVKYRCEDGQGDERYGVCSNYLSGLRADDELFMFVRSALGFHLPSDRSRPIILIGPGTGIAPFRSFWQEFQVLSDLDPTAKLPKMWLFFGCRNRDVDLYAEEKAELQKDQILDRVFLALSREQAIPKTYVQDLIEQEFDSLYQLIVQERGHIYVCGDVTMAEHVYQTIRKCIAGKEQKSEAEVETFLLTLRDESRYHEDIFGITLRTAEIHTKSRATARIRMASQP.

The segment at 23-195 (AQQQQQQQQQ…QPRKMSQDYR (173 aa)) is disordered. Low complexity-rich tracts occupy residues 24 to 51 (QQQQ…TQQQ) and 64 to 73 (LNGNGLLSGN). Over residues 142–159 (SGSGSGSGGGGVGVGQGA) the composition is skewed to gly residues. The segment covering 165–189 (GSCTASGKSSRELSPSPKNQQQPRK) has biased composition (polar residues). Ser250 serves as a coordination point for (6R)-L-erythro-5,6,7,8-tetrahydrobiopterin. Residue Cys328 coordinates heme b. L-arginine is bound by residues Gln391, Trp500, Tyr501, Glu505, and Asn510. (6R)-L-erythro-5,6,7,8-tetrahydrobiopterin-binding residues include Trp591 and Phe604. Tyr619 is a binding site for heme b. Residues 641-661 (PRRKFNFKQIARAVKFTSKLF) form a calmodulin-binding region. A Flavodoxin-like domain is found at 671–868 (ATVLYATETG…SFRKWAPEVF (198 aa)). FMN is bound at residue 814–845 (VFALGSSAYPNFCAFGQYVDNILGELGGERLL). Residues 928–1167 (AKAKPHNLTR…VRSALGFHLP (240 aa)) form the FAD-binding FR-type domain. Residues 957-968 (YEPGDHVGIFPA) and 1100-1110 (LQPRFYSISSS) contribute to the FAD site. NADP(+)-binding positions include 1175–1193 (ILIG…WQEF) and 1273–1287 (GHIY…AEHV).

It belongs to the NOS family. It depends on heme b as a cofactor. FAD serves as cofactor. FMN is required as a cofactor.

It carries out the reaction 2 L-arginine + 3 NADPH + 4 O2 + H(+) = 2 L-citrulline + 2 nitric oxide + 3 NADP(+) + 4 H2O. With respect to regulation, stimulated by calcium/calmodulin. Its function is as follows. Catalyzes the conversion of L-arginine to L-citrulline producing nitric oxide (NO) which is a messenger molecule with diverse functions throughout the body. Truncated isoforms (isoform 3-isoform 6) are able to form intracellular complexes with the full-length protein and serve as dominant negative inhibitors of the enzyme activity. This chain is Nitric oxide synthase (Nos), found in Drosophila melanogaster (Fruit fly).